The primary structure comprises 237 residues: Sugar fermentation stimulation protein homolog (237 aa).

Belongs to the SfsA family.

In Pseudomonas putida (strain W619), this protein is Sugar fermentation stimulation protein homolog.